The primary structure comprises 476 residues: Ribulose bisphosphate carboxylase large chain (476 aa).

Residues N124 and T174 each contribute to the substrate site. K176 functions as the Proton acceptor in the catalytic mechanism. K178 is a binding site for substrate. Mg(2+) is bound by residues K202, D204, and E205. K202 is modified (N6-carboxylysine). H295 (proton acceptor) is an active-site residue. Substrate contacts are provided by R296, H328, and S380.

Belongs to the RuBisCO large chain family. Type I subfamily. Heterohexadecamer of 8 large chains and 8 small chains; disulfide-linked. The disulfide link is formed within the large subunit homodimers. Forms complexes of many stoichiometries with Raf1 with and without RbcS. RuBisCO interacts with the C-terminus of CcmM. It depends on Mg(2+) as a cofactor. Post-translationally, the disulfide bond which can form in the large chain dimeric partners within the hexadecamer appears to be associated with oxidative stress and protein turnover.

It localises to the carboxysome. The catalysed reaction is 2 (2R)-3-phosphoglycerate + 2 H(+) = D-ribulose 1,5-bisphosphate + CO2 + H2O. The enzyme catalyses D-ribulose 1,5-bisphosphate + O2 = 2-phosphoglycolate + (2R)-3-phosphoglycerate + 2 H(+). In terms of biological role, ruBisCO catalyzes two reactions: the carboxylation of D-ribulose 1,5-bisphosphate, the primary event in carbon dioxide fixation, as well as the oxidative fragmentation of the pentose substrate in the photorespiration process. Both reactions occur simultaneously and in competition at the same active site. The polypeptide is Ribulose bisphosphate carboxylase large chain (Nostoc sp. (strain PCC 7120 / SAG 25.82 / UTEX 2576)).